The following is a 97-amino-acid chain: NADH-ubiquinone oxidoreductase chain 4L (97 aa).

3 helical membrane passes run 1 to 21, 25 to 45, and 60 to 80; these read MALL…ILLN, FLSI…GIAI, and LFVL…MVGL.

The protein belongs to the complex I subunit 4L family.

The protein localises to the mitochondrion membrane. The catalysed reaction is a ubiquinone + NADH + 5 H(+)(in) = a ubiquinol + NAD(+) + 4 H(+)(out). In terms of biological role, core subunit of the mitochondrial membrane respiratory chain NADH dehydrogenase (Complex I) that is believed to belong to the minimal assembly required for catalysis. Complex I functions in the transfer of electrons from NADH to the respiratory chain. The immediate electron acceptor for the enzyme is believed to be ubiquinone. This chain is NADH-ubiquinone oxidoreductase chain 4L (ND4L), found in Strongylocentrotus purpuratus (Purple sea urchin).